A 1186-amino-acid chain; its full sequence is Sericin 1 (1186 aa).

An N-terminal signal peptide occupies residues Met-1–Gly-21. 2 stretches are compositionally biased toward polar residues: residues Ala-39–Asn-48 and Asn-104–Asp-115. Disordered regions lie at residues Ala-39 to Arg-119, Ala-131 to Ser-494, and Gly-518 to Leu-1157. The span at Ala-145–Ala-155 shows a compositional bias: low complexity. A compositionally biased stretch (basic and acidic residues) spans Ser-180 to Arg-198. Positions Ser-211–Ser-224 are enriched in low complexity. Residues Tyr-256–Ser-275 are compositionally biased toward polar residues. The span at Ala-286–Ser-299 shows a compositional bias: basic and acidic residues. A compositionally biased stretch (low complexity) spans Ser-300–Ser-312. Residues Ser-321–Ser-334 show a composition bias toward basic and acidic residues. Polar residues-rich tracts occupy residues Arg-356–Lys-380, Ala-393–Tyr-409, and Phe-416–Glu-445. 6 stretches are compositionally biased toward low complexity: residues Ala-465–Glu-491, Gly-518–Ala-537, Ser-553–Ser-698, Arg-705–Ser-1004, Ser-1015–Glu-1075, and Ser-1097–Ser-1145. 11 consecutive repeat copies span residues Ser-593–Val-630, Ser-631–Val-668, Ser-669–Val-706, Ser-707–Val-744, Ser-745–Val-782, Ser-783–Val-820, Ser-821–Val-858, Ser-859–Val-896, Ser-897–Val-934, Ser-935–Val-972, and Ser-973–Val-1010. Residues Arg-1148–Leu-1157 are compositionally biased toward basic residues.

As to expression, produced exclusively in the middle (MSG) section of silk glands.

The protein localises to the secreted. Functionally, provides the silk fibroin thread with a sticky coating. Acts as a cement by sticking silk threads together. The sequence is that of Sericin 1 (ser1) from Bombyx mori (Silk moth).